A 74-amino-acid chain; its full sequence is DNA-directed RNA polymerase subunit omega (74 aa).

Belongs to the RNA polymerase subunit omega family. As to quaternary structure, the RNAP catalytic core consists of 2 alpha, 1 beta, 1 beta' and 1 omega subunit. When a sigma factor is associated with the core the holoenzyme is formed, which can initiate transcription.

It catalyses the reaction RNA(n) + a ribonucleoside 5'-triphosphate = RNA(n+1) + diphosphate. Promotes RNA polymerase assembly. Latches the N- and C-terminal regions of the beta' subunit thereby facilitating its interaction with the beta and alpha subunits. The sequence is that of DNA-directed RNA polymerase subunit omega from Solidesulfovibrio magneticus (strain ATCC 700980 / DSM 13731 / RS-1) (Desulfovibrio magneticus).